We begin with the raw amino-acid sequence, 251 residues long: 3-deoxy-manno-octulosonate cytidylyltransferase (251 aa).

This sequence belongs to the KdsB family.

It localises to the cytoplasm. The enzyme catalyses 3-deoxy-alpha-D-manno-oct-2-ulosonate + CTP = CMP-3-deoxy-beta-D-manno-octulosonate + diphosphate. It functions in the pathway nucleotide-sugar biosynthesis; CMP-3-deoxy-D-manno-octulosonate biosynthesis; CMP-3-deoxy-D-manno-octulosonate from 3-deoxy-D-manno-octulosonate and CTP: step 1/1. It participates in bacterial outer membrane biogenesis; lipopolysaccharide biosynthesis. Functionally, activates KDO (a required 8-carbon sugar) for incorporation into bacterial lipopolysaccharide in Gram-negative bacteria. This chain is 3-deoxy-manno-octulosonate cytidylyltransferase, found in Geotalea uraniireducens (strain Rf4) (Geobacter uraniireducens).